The following is a 413-amino-acid chain: Arginine biosynthesis bifunctional protein ArgJ, mitochondrial (413 aa).

Substrate is bound by residues T168, K194, T205, and E292. T205 acts as the Nucleophile in catalysis.

This sequence belongs to the ArgJ family. As to quaternary structure, heterodimer of an alpha and a beta chain. In terms of processing, the alpha and beta chains are autoproteolytically processed from a single precursor protein within the mitochondrion.

The protein resides in the mitochondrion matrix. It carries out the reaction N(2)-acetyl-L-ornithine + L-glutamate = N-acetyl-L-glutamate + L-ornithine. It catalyses the reaction L-glutamate + acetyl-CoA = N-acetyl-L-glutamate + CoA + H(+). Its pathway is amino-acid biosynthesis; L-arginine biosynthesis; L-ornithine and N-acetyl-L-glutamate from L-glutamate and N(2)-acetyl-L-ornithine (cyclic): step 1/1. It functions in the pathway amino-acid biosynthesis; L-arginine biosynthesis; N(2)-acetyl-L-ornithine from L-glutamate: step 1/4. In terms of biological role, catalyzes two activities which are involved in the cyclic version of arginine biosynthesis: the synthesis of acetylglutamate from glutamate and acetyl-CoA, and of ornithine by transacetylation between acetylornithine and glutamate. The polypeptide is Arginine biosynthesis bifunctional protein ArgJ, mitochondrial (Clavispora lusitaniae (strain ATCC 42720) (Yeast)).